The primary structure comprises 364 residues: Delta(7)-sterol 5(6)-desaturase (364 aa).

3 helical membrane passes run 94–114, 142–162, and 181–201; these read FFSL…ITAS, LAVS…MLEL, and KLLI…YLAH. A Fatty acid hydroxylase domain is found at 188 to 312; the sequence is TFIFFTDCGI…FTTLWDRLGG (125 aa). A Histidine box-1 motif is present at residues 201 to 205; sequence HRWLH. A Histidine box-2 motif is present at residues 214-218; the sequence is HKPHH. A helical membrane pass occupies residues 249–269; sequence ILPLHKISYLILFTFVNFWSV. The short motif at 289–293 is the Histidine box-3 element; sequence HTVHH.

It belongs to the sterol desaturase family. It depends on Fe cation as a cofactor.

The protein localises to the endoplasmic reticulum membrane. The catalysed reaction is a Delta(7)-sterol + 2 Fe(II)-[cytochrome b5] + O2 + 2 H(+) = a Delta(5),Delta(7)-sterol + 2 Fe(III)-[cytochrome b5] + 2 H2O. Its pathway is steroid metabolism; ergosterol biosynthesis; ergosterol from zymosterol: step 3/5. In terms of biological role, catalyzes the introduction of a C-5 double bond in the B ring of ergosterol. May contribute to the regulation of ergosterol biosynthesis. The chain is Delta(7)-sterol 5(6)-desaturase (ERG3) from Candida glabrata (strain ATCC 2001 / BCRC 20586 / JCM 3761 / NBRC 0622 / NRRL Y-65 / CBS 138) (Yeast).